The sequence spans 331 residues: Glycerol-3-phosphate dehydrogenase [NAD(P)+] (331 aa).

The NADPH site is built by S10, W11, R31, R32, and K105. Residues K105 and G135 each contribute to the sn-glycerol 3-phosphate site. Position 139 (A139) interacts with NADPH. 5 residues coordinate sn-glycerol 3-phosphate: K190, D243, S253, R254, and N255. The active-site Proton acceptor is K190. Residue R254 coordinates NADPH. 2 residues coordinate NADPH: V279 and E281.

Belongs to the NAD-dependent glycerol-3-phosphate dehydrogenase family.

The protein localises to the cytoplasm. The catalysed reaction is sn-glycerol 3-phosphate + NAD(+) = dihydroxyacetone phosphate + NADH + H(+). It carries out the reaction sn-glycerol 3-phosphate + NADP(+) = dihydroxyacetone phosphate + NADPH + H(+). Its pathway is membrane lipid metabolism; glycerophospholipid metabolism. In terms of biological role, catalyzes the reduction of the glycolytic intermediate dihydroxyacetone phosphate (DHAP) to sn-glycerol 3-phosphate (G3P), the key precursor for phospholipid synthesis. The polypeptide is Glycerol-3-phosphate dehydrogenase [NAD(P)+] (Corynebacterium diphtheriae (strain ATCC 700971 / NCTC 13129 / Biotype gravis)).